Consider the following 507-residue polypeptide: ATP synthase subunit alpha, chloroplastic (507 aa).

170-177 (GDRQTGKT) provides a ligand contact to ATP. Thr-257 is subject to Phosphothreonine.

This sequence belongs to the ATPase alpha/beta chains family. F-type ATPases have 2 components, CF(1) - the catalytic core - and CF(0) - the membrane proton channel. CF(1) has five subunits: alpha(3), beta(3), gamma(1), delta(1), epsilon(1). CF(0) has four main subunits: a, b, b' and c.

The protein resides in the plastid. It localises to the chloroplast thylakoid membrane. The catalysed reaction is ATP + H2O + 4 H(+)(in) = ADP + phosphate + 5 H(+)(out). Functionally, produces ATP from ADP in the presence of a proton gradient across the membrane. The alpha chain is a regulatory subunit. This chain is ATP synthase subunit alpha, chloroplastic, found in Barbarea verna (Land cress).